The sequence spans 282 residues: Succinate dehydrogenase [ubiquinone] iron-sulfur subunit, mitochondrial (282 aa).

The N-terminal 30 residues, 1-30, are a transit peptide targeting the mitochondrion; that stretch reads MAATVGVSLKRGFPAAVLGRVGLQFQACRG. Positions 42 to 135 constitute a 2Fe-2S ferredoxin-type domain; that stretch reads KKFAIYRWDP…VSKIYPLPHM (94 aa). N6-acetyllysine occurs at positions 53 and 57. [2Fe-2S] cluster is bound by residues C95, C100, C103, and C115. The tract at residues 148–220 is interaction with SDHAF1; the sequence is FYAQYKSIEP…PAVLMQAYRW (73 aa). A 4Fe-4S ferredoxin-type domain is found at 178–208; sequence DREKLDGLYECILCACCSTSCPSYWWNGDKY. [4Fe-4S] cluster contacts are provided by C188, C191, and C194. C198 lines the [3Fe-4S] cluster pocket. W203 is a binding site for a ubiquinone. C245 and C251 together coordinate [3Fe-4S] cluster. C255 provides a ligand contact to [4Fe-4S] cluster.

Belongs to the succinate dehydrogenase/fumarate reductase iron-sulfur protein family. Component of complex II composed of four subunits: the flavoprotein (FP) SDHA, iron-sulfur protein (IP) SDHB, and a cytochrome b560 composed of SDHC and SDHD. Interacts with SDHAF1; the interaction is required for iron-sulfur cluster incorporation into SDHB. [2Fe-2S] cluster serves as cofactor. It depends on [3Fe-4S] cluster as a cofactor. [4Fe-4S] cluster is required as a cofactor.

The protein resides in the mitochondrion inner membrane. It catalyses the reaction a quinone + succinate = fumarate + a quinol. It carries out the reaction (R)-malate + a quinone = enol-oxaloacetate + a quinol. The enzyme catalyses (S)-malate + a quinone = enol-oxaloacetate + a quinol. It participates in carbohydrate metabolism; tricarboxylic acid cycle; fumarate from succinate (eukaryal route): step 1/1. Its activity is regulated as follows. Enol-oxaloacetate inhibits the succinate dehydrogenase activity. Its function is as follows. Iron-sulfur protein (IP) subunit of the succinate dehydrogenase complex (mitochondrial respiratory chain complex II), responsible for transferring electrons from succinate to ubiquinone (coenzyme Q). SDH also oxidizes malate to the non-canonical enol form of oxaloacetate, enol-oxaloacetate. Enol-oxaloacetate, which is a potent inhibitor of the succinate dehydrogenase activity, is further isomerized into keto-oxaloacetate. This chain is Succinate dehydrogenase [ubiquinone] iron-sulfur subunit, mitochondrial (Sdhb), found in Mus musculus (Mouse).